We begin with the raw amino-acid sequence, 350 residues long: MLRECDYSQALLEQVNQAISDKTPLVIQGSNSKAFLGRPVTGQTLDVRCHRGIVNYDPTELVITARVGTPLVTIEAALESAGQMLPCEPPHYGEEATWGGMVACGLAGPRRPWSGSVRDFVLGTRIITGAGKHLRFGGEVMKNVAGYDLSRLMVGSYGCLGVLTEISMKVLPRPRASLSLRREISLQEAMSEIAEWQLQPLPISGLCYFDNALWIRLEGGEGSVKAARELLGGEEVAGQFWQQLREQQLPFFSLPGTLWRISLPSDAPMMDLPGEQLIDWGGALRWLKSTAEDNQIHRIARNAGGHATRFSAGDGGFAPLSAPLFRYHQQLKQQLDPCGVFNPGRMYAEL.

One can recognise an FAD-binding PCMH-type domain in the interval 1–173 (MLRECDYSQA…TEISMKVLPR (173 aa)).

The glycolate oxidase likely consists of three subunits, GlcD, GlcE and GlcF. The cofactor is FAD.

It localises to the cell inner membrane. It carries out the reaction glycolate + A = glyoxylate + AH2. The enzyme catalyses (R)-lactate + A = pyruvate + AH2. Its activity is regulated as follows. In vitro the glycolate oxidase activity is inhibited by the sulfhydryl inhibitors CuSO4 and PCMB, by KCN, but not by the metal complexing agent EDTA. Component of a complex that catalyzes the oxidation of glycolate to glyoxylate. Is required for E.coli to grow on glycolate as a sole source of carbon. Is also able to oxidize D-lactate ((R)-lactate) with a similar rate. Does not link directly to O(2), and 2,6-dichloroindophenol (DCIP) and phenazine methosulfate (PMS) can act as artificial electron acceptors in vitro, but the physiological molecule that functions as a primary electron acceptor during glycolate oxidation is unknown. This Escherichia coli (strain K12) protein is Glycolate oxidase subunit GlcE.